The chain runs to 491 residues: Tryptophan 5-hydroxylase 2 (491 aa).

Residue S19 is modified to Phosphoserine. The tract at residues 33–63 (NLTVNKSNSGKNDDKKGNKGSSRSETAPDSG) is disordered. One can recognise an ACT domain in the interval 66–141 (AVVFSLRNEV…TIVTLNPPEN (76 aa)). The Fe cation site is built by H319, H324, and E364.

The protein belongs to the biopterin-dependent aromatic amino acid hydroxylase family. Interacts with DNAJC12. Fe(2+) serves as cofactor.

It catalyses the reaction (6R)-L-erythro-5,6,7,8-tetrahydrobiopterin + L-tryptophan + O2 = 5-hydroxy-L-tryptophan + (4aS,6R)-4a-hydroxy-L-erythro-5,6,7,8-tetrahydrobiopterin. It functions in the pathway aromatic compound metabolism; serotonin biosynthesis; serotonin from L-tryptophan: step 1/2. The chain is Tryptophan 5-hydroxylase 2 (TPH2) from Equus caballus (Horse).